The primary structure comprises 347 residues: NADH-ubiquinone oxidoreductase chain 2 (347 aa).

10 consecutive transmembrane segments (helical) span residues 13-33 (VILG…WIGF), 59-79 (YFFT…LNLM), 96-116 (MIMT…FWVP), 122-142 (IPLS…LTVL), 149-169 (INLT…GWGG), 178-198 (IMAY…IYNP), 200-220 (MTLL…MLFM), 240-260 (IVTI…LTGF), 276-296 (IILP…YMRL), and 325-345 (LLTP…MIII).

It belongs to the complex I subunit 2 family. Core subunit of respiratory chain NADH dehydrogenase (Complex I) which is composed of 45 different subunits. Interacts with TMEM242.

The protein resides in the mitochondrion inner membrane. It carries out the reaction a ubiquinone + NADH + 5 H(+)(in) = a ubiquinol + NAD(+) + 4 H(+)(out). Core subunit of the mitochondrial membrane respiratory chain NADH dehydrogenase (Complex I) which catalyzes electron transfer from NADH through the respiratory chain, using ubiquinone as an electron acceptor. Essential for the catalytic activity and assembly of complex I. This chain is NADH-ubiquinone oxidoreductase chain 2, found in Molossus ater (Black mastiff bat).